We begin with the raw amino-acid sequence, 361 residues long: Holliday junction branch migration complex subunit RuvB (361 aa).

Composition is skewed to basic and acidic residues over residues 1–13 (MSDV…KLPE) and 33–43 (QGEHDIERSLR). Residues 1-43 (MSDVERTEFKLPEGMDLSSPPQRNQDVDAAEQQGEHDIERSLR) form a disordered region. The interval 2–203 (SDVERTEFKL…FGFTAQMEYY (202 aa)) is large ATPase domain (RuvB-L). ATP-binding positions include Leu-42, Arg-43, Gly-84, Lys-87, Thr-88, Thr-89, 150–152 (EDF), Arg-193, Tyr-203, and Arg-240. Position 88 (Thr-88) interacts with Mg(2+). A small ATPAse domain (RuvB-S) region spans residues 204–274 (DTEDLTRVIS…AAQAALRVFD (71 aa)). The head domain (RuvB-H) stretch occupies residues 277-361 (ERGLDRLDRA…PEGAIGGTLF (85 aa)). Arg-332 and Arg-337 together coordinate DNA.

The protein belongs to the RuvB family. In terms of assembly, homohexamer. Forms an RuvA(8)-RuvB(12)-Holliday junction (HJ) complex. HJ DNA is sandwiched between 2 RuvA tetramers; dsDNA enters through RuvA and exits via RuvB. An RuvB hexamer assembles on each DNA strand where it exits the tetramer. Each RuvB hexamer is contacted by two RuvA subunits (via domain III) on 2 adjacent RuvB subunits; this complex drives branch migration. In the full resolvosome a probable DNA-RuvA(4)-RuvB(12)-RuvC(2) complex forms which resolves the HJ.

The protein localises to the cytoplasm. The catalysed reaction is ATP + H2O = ADP + phosphate + H(+). Its function is as follows. The RuvA-RuvB-RuvC complex processes Holliday junction (HJ) DNA during genetic recombination and DNA repair, while the RuvA-RuvB complex plays an important role in the rescue of blocked DNA replication forks via replication fork reversal (RFR). RuvA specifically binds to HJ cruciform DNA, conferring on it an open structure. The RuvB hexamer acts as an ATP-dependent pump, pulling dsDNA into and through the RuvAB complex. RuvB forms 2 homohexamers on either side of HJ DNA bound by 1 or 2 RuvA tetramers; 4 subunits per hexamer contact DNA at a time. Coordinated motions by a converter formed by DNA-disengaged RuvB subunits stimulates ATP hydrolysis and nucleotide exchange. Immobilization of the converter enables RuvB to convert the ATP-contained energy into a lever motion, pulling 2 nucleotides of DNA out of the RuvA tetramer per ATP hydrolyzed, thus driving DNA branch migration. The RuvB motors rotate together with the DNA substrate, which together with the progressing nucleotide cycle form the mechanistic basis for DNA recombination by continuous HJ branch migration. Branch migration allows RuvC to scan DNA until it finds its consensus sequence, where it cleaves and resolves cruciform DNA. The polypeptide is Holliday junction branch migration complex subunit RuvB (Corynebacterium aurimucosum (strain ATCC 700975 / DSM 44827 / CIP 107346 / CN-1) (Corynebacterium nigricans)).